Reading from the N-terminus, the 209-residue chain is ATP-dependent Clp protease proteolytic subunit (209 aa).

Residue Ser111 is the Nucleophile of the active site. The active site involves His136.

Belongs to the peptidase S14 family. Fourteen ClpP subunits assemble into 2 heptameric rings which stack back to back to give a disk-like structure with a central cavity, resembling the structure of eukaryotic proteasomes.

It is found in the cytoplasm. It catalyses the reaction Hydrolysis of proteins to small peptides in the presence of ATP and magnesium. alpha-casein is the usual test substrate. In the absence of ATP, only oligopeptides shorter than five residues are hydrolyzed (such as succinyl-Leu-Tyr-|-NHMec, and Leu-Tyr-Leu-|-Tyr-Trp, in which cleavage of the -Tyr-|-Leu- and -Tyr-|-Trp bonds also occurs).. Its function is as follows. Cleaves peptides in various proteins in a process that requires ATP hydrolysis. Has a chymotrypsin-like activity. Plays a major role in the degradation of misfolded proteins. The chain is ATP-dependent Clp protease proteolytic subunit from Dechloromonas aromatica (strain RCB).